Consider the following 140-residue polypeptide: Protein PsiE homolog (140 aa).

The next 4 membrane-spanning stretches (helical) occupy residues 16–36, 57–77, 85–105, and 110–130; these read IVLQ…LSVF, YHLI…VMII, HFPL…LIII, and PLDL…LFIA.

Belongs to the PsiE family.

The protein resides in the cell membrane. The sequence is that of Protein PsiE homolog from Bacillus cereus (strain ATCC 14579 / DSM 31 / CCUG 7414 / JCM 2152 / NBRC 15305 / NCIMB 9373 / NCTC 2599 / NRRL B-3711).